The sequence spans 429 residues: Serine hydroxymethyltransferase (429 aa).

Residues leucine 125 and 129 to 131 (GHL) each bind (6S)-5,6,7,8-tetrahydrofolate. An N6-(pyridoxal phosphate)lysine modification is found at lysine 234.

Belongs to the SHMT family. As to quaternary structure, homodimer. The cofactor is pyridoxal 5'-phosphate.

Its subcellular location is the cytoplasm. It catalyses the reaction (6R)-5,10-methylene-5,6,7,8-tetrahydrofolate + glycine + H2O = (6S)-5,6,7,8-tetrahydrofolate + L-serine. The protein operates within one-carbon metabolism; tetrahydrofolate interconversion. It participates in amino-acid biosynthesis; glycine biosynthesis; glycine from L-serine: step 1/1. Its function is as follows. Catalyzes the reversible interconversion of serine and glycine with tetrahydrofolate (THF) serving as the one-carbon carrier. This reaction serves as the major source of one-carbon groups required for the biosynthesis of purines, thymidylate, methionine, and other important biomolecules. Also exhibits THF-independent aldolase activity toward beta-hydroxyamino acids, producing glycine and aldehydes, via a retro-aldol mechanism. This Allorhizobium ampelinum (strain ATCC BAA-846 / DSM 112012 / S4) (Agrobacterium vitis (strain S4)) protein is Serine hydroxymethyltransferase.